The chain runs to 906 residues: Protein translocase subunit SecA (906 aa).

ATP is bound by residues Q87, 105 to 109 (GEGKT), and D512. A disordered region spans residues 875–897 (VTFVRDEQKVGRNDPCPCGSGKK). Zn(2+)-binding residues include C890, C892, C901, and H902.

The protein belongs to the SecA family. Monomer and homodimer. Part of the essential Sec protein translocation apparatus which comprises SecA, SecYEG and auxiliary proteins SecDF-YajC and YidC. The cofactor is Zn(2+).

The protein resides in the cell inner membrane. It localises to the cytoplasm. It carries out the reaction ATP + H2O + cellular proteinSide 1 = ADP + phosphate + cellular proteinSide 2.. In terms of biological role, part of the Sec protein translocase complex. Interacts with the SecYEG preprotein conducting channel. Has a central role in coupling the hydrolysis of ATP to the transfer of proteins into and across the cell membrane, serving both as a receptor for the preprotein-SecB complex and as an ATP-driven molecular motor driving the stepwise translocation of polypeptide chains across the membrane. The sequence is that of Protein translocase subunit SecA from Aeromonas hydrophila subsp. hydrophila (strain ATCC 7966 / DSM 30187 / BCRC 13018 / CCUG 14551 / JCM 1027 / KCTC 2358 / NCIMB 9240 / NCTC 8049).